An 846-amino-acid chain; its full sequence is Circadian locomoter output cycles protein kaput (846 aa).

A Nuclear localization signal motif is present at residues 32–47 (DKAKRVSRNKSEKKRR). The 51-residue stretch at 34–84 (AKRVSRNKSEKKRRDQFNVLIKELGSMLPGNARKMDKSTVLQKSIDFLRKH) folds into the bHLH domain. Serine 38 and serine 42 each carry phosphoserine. A Glycyl lysine isopeptide (Lys-Gly) (interchain with G-Cter in SUMO1) cross-link involves residue lysine 67. PAS domains follow at residues 107–177 (NEEF…LLES) and 262–332 (FIKE…MQYG). Residues 336–379 (SCYYRFLTKGQQWIWLQTHYYITYHQWNSRPEFIVCTHTVVSYA) form the PAC domain. Residues 371 to 845 (CTHTVVSYAE…SLPDPSKVQP (475 aa)) are interaction with NR3C1. 2 disordered regions span residues 392–411 (EESL…SDNR) and 420–495 (ALER…SSLT). A Phosphoserine modification is found at serine 408. At serine 427 the chain carries Phosphoserine; by GSK3-beta. A Phosphoserine modification is found at serine 431. Positions 447–463 (DPSSTPTKIPTDTSTPP) are enriched in polar residues. Residues 450–570 (STPTKIPTDT…QGLQMFLQQS (121 aa)) are interaction with SIRT1. Threonine 451 and threonine 461 each carry phosphothreonine; by CDK5. Residues 478 to 493 (SSFSSQSINSQSVGSS) show a composition bias toward low complexity. Residues 514–564 (FQFSAQLGAMQHLKDQLEQRTRMIEANIHRQQEELRKIQEQLQMVHGQGLQ) are implicated in the circadian rhythmicity. Composition is skewed to low complexity over residues 624–637 (QQQT…QSQQ) and 644–654 (SQQTSLPSQTQ). Disordered regions lie at residues 624 to 654 (QQQT…SQTQ), 764 to 783 (EQQL…QPPQ), and 811 to 846 (STFP…VQPQ). The segment covering 811–829 (STFPQSHHQQHQSQQQQQL) has biased composition (low complexity). Lysine 842 is covalently cross-linked (Glycyl lysine isopeptide (Lys-Gly) (interchain with G-Cter in SUMO1)).

In terms of assembly, component of the circadian clock oscillator which includes the CRY proteins, CLOCK or NPAS2, BMAL1 or BMAL2, CSNK1D and/or CSNK1E, TIMELESS and the PER proteins. Interacts with KMT2A; in a circadian manner. Forms a heterodimer with BMAL1. The CLOCK-BMAL1 heterodimer is required for E-box-dependent transactivation, for CLOCK nuclear translocation and degradation, and for phosphorylation of both CLOCK and BMAL1. Interacts with NR3C1 in a ligand-dependent fashion. Interacts with ESR1 and estrogen stimulates this interaction. Interacts with the complex p35/CDK5. Interacts with RELA/p65. Interacts with KAT2B, CREBBP, EP300. Interacts with ID1 and ID3. Interacts with ID2. Interacts with MTA1. Interacts with OGA. Interacts with SIRT1. Interacts with CIPC. Interacts with EZH2. Interacts with EIF4E, PIWIL1 and DDX4. Interacts with PER2 and CRY1 and the interaction with PER and CRY proteins requires translocation to the nucleus. Interacts with PER1 and CRY2. Interaction of the CLOCK-BMAL1 heterodimer with PER or CRY inhibits transcription activation. Interaction of the CLOCK-BMAL1 with CRY1 is independent of DNA but with PER2 is off DNA. The CLOCK-BMAL1 heterodimer interacts with GSK3B. Interacts with KDM5A. Interacts with MYBBP1A. Interacts with THRAP3. Interacts with MED1; this interaction requires the presence of THRAP3. Interacts with NCOA2. The CLOCK-BMAL1 heterodimer interacts with PASD1. Interacts with ASS1 and IMPDH2; in a circadian manner. Interacts with NDUFA9. Interacts with PIWIL2 (via PIWI domain). Interacts with HNF4A. Post-translationally, ubiquitinated, leading to its proteasomal degradation. In terms of processing, O-glycosylated; contains O-GlcNAc. O-glycosylation by OGT prevents protein degradation by inhibiting ubiquitination. It also stabilizes the CLOCK-BMAL1 heterodimer thereby increasing CLOCK-BMAL1-mediated transcriptional activation of PER1/2/3 and CRY1/2. Phosphorylation is dependent on the CLOCK-BMAL1 heterodimer formation. Phosphorylation enhances the transcriptional activity, alters the subcellular localization and decreases the stability of the heterodimer by promoting its degradation. Phosphorylation shows circadian variations in the liver. May be phosphorylated by CSNK1D and CKSN1E. Post-translationally, sumoylation enhances its transcriptional activity and interaction with ESR1, resulting in up-regulation of ESR1 activity. Estrogen stimulates sumoylation. Desumoylation by SENP1 negatively regulates its transcriptional activity. Sumoylation stimulates cell proliferation and increases the proportion of S phase cells in breast cancer cell lines. In terms of processing, undergoes lysosome-mediated degradation in a time-dependent manner in the liver. In terms of tissue distribution, hair follicles (at protein level). Expressed in all tissues examined including spleen, thymus, prostate, testis, ovary, small intestine, colon, leukocytes, heart, brain, placenta, lung, liver, skeletal muscle, kidney and pancreas. Highest levels in testis and skeletal muscle. Low levels in thymus, lung and liver. Expressed in all brain regions with highest levels in cerebellum. Highly expressed in the suprachiasmatic nucleus (SCN).

Its subcellular location is the nucleus. It localises to the cytoplasm. It is found in the cytosol. The catalysed reaction is L-lysyl-[protein] + acetyl-CoA = N(6)-acetyl-L-lysyl-[protein] + CoA + H(+). With respect to regulation, there is conflicting data about the effect of NAD cofactors on activity. PubMed:11441146 suggests that the redox state of the cell can modulate the transcriptional activity of the CLOCK-BMAL1 heterodimer; NADH and NADPH enhance the DNA-binding activity of the heterodimer. PubMed:23229515 reports that NADH and NADPH have no significant effect on DNA-binding activity of the CLOCK-BMAL1 heterodimer. In terms of biological role, transcriptional activator which forms a core component of the circadian clock. The circadian clock, an internal time-keeping system, regulates various physiological processes through the generation of approximately 24 hour circadian rhythms in gene expression, which are translated into rhythms in metabolism and behavior. It is derived from the Latin roots 'circa' (about) and 'diem' (day) and acts as an important regulator of a wide array of physiological functions including metabolism, sleep, body temperature, blood pressure, endocrine, immune, cardiovascular, and renal function. Consists of two major components: the central clock, residing in the suprachiasmatic nucleus (SCN) of the brain, and the peripheral clocks that are present in nearly every tissue and organ system. Both the central and peripheral clocks can be reset by environmental cues, also known as Zeitgebers (German for 'timegivers'). The predominant Zeitgeber for the central clock is light, which is sensed by retina and signals directly to the SCN. The central clock entrains the peripheral clocks through neuronal and hormonal signals, body temperature and feeding-related cues, aligning all clocks with the external light/dark cycle. Circadian rhythms allow an organism to achieve temporal homeostasis with its environment at the molecular level by regulating gene expression to create a peak of protein expression once every 24 hours to control when a particular physiological process is most active with respect to the solar day. Transcription and translation of core clock components (CLOCK, NPAS2, BMAL1, BMAL2, PER1, PER2, PER3, CRY1 and CRY2) plays a critical role in rhythm generation, whereas delays imposed by post-translational modifications (PTMs) are important for determining the period (tau) of the rhythms (tau refers to the period of a rhythm and is the length, in time, of one complete cycle). A diurnal rhythm is synchronized with the day/night cycle, while the ultradian and infradian rhythms have a period shorter and longer than 24 hours, respectively. Disruptions in the circadian rhythms contribute to the pathology of cardiovascular diseases, cancer, metabolic syndromes and aging. A transcription/translation feedback loop (TTFL) forms the core of the molecular circadian clock mechanism. Transcription factors, CLOCK or NPAS2 and BMAL1 or BMAL2, form the positive limb of the feedback loop, act in the form of a heterodimer and activate the transcription of core clock genes and clock-controlled genes (involved in key metabolic processes), harboring E-box elements (5'-CACGTG-3') within their promoters. The core clock genes: PER1/2/3 and CRY1/2 which are transcriptional repressors form the negative limb of the feedback loop and interact with the CLOCK|NPAS2-BMAL1|BMAL2 heterodimer inhibiting its activity and thereby negatively regulating their own expression. This heterodimer also activates nuclear receptors NR1D1/2 and RORA/B/G, which form a second feedback loop and which activate and repress BMAL1 transcription, respectively. Regulates the circadian expression of ICAM1, VCAM1, CCL2, THPO and MPL and also acts as an enhancer of the transactivation potential of NF-kappaB. Plays an important role in the homeostatic regulation of sleep. The CLOCK-BMAL1 heterodimer regulates the circadian expression of SERPINE1/PAI1, VWF, B3, CCRN4L/NOC, NAMPT, DBP, MYOD1, PPARGC1A, PPARGC1B, SIRT1, GYS2, F7, NGFR, GNRHR, BHLHE40/DEC1, ATF4, MTA1, KLF10 and also genes implicated in glucose and lipid metabolism. Promotes rhythmic chromatin opening, regulating the DNA accessibility of other transcription factors. The CLOCK-BMAL2 heterodimer activates the transcription of SERPINE1/PAI1 and BHLHE40/DEC1. The preferred binding motif for the CLOCK-BMAL1 heterodimer is 5'-CACGTGA-3', which contains a flanking adenine nucleotide at the 3-prime end of the canonical 6-nucleotide E-box sequence. CLOCK specifically binds to the half-site 5'-CAC-3', while BMAL1 binds to the half-site 5'-GTGA-3'. The CLOCK-BMAL1 heterodimer also recognizes the non-canonical E-box motifs 5'-AACGTGA-3' and 5'-CATGTGA-3'. CLOCK has an intrinsic acetyltransferase activity, which enables circadian chromatin remodeling by acetylating histones and nonhistone proteins, including its own partner BMAL1. Represses glucocorticoid receptor NR3C1/GR-induced transcriptional activity by reducing the association of NR3C1/GR to glucocorticoid response elements (GREs) via the acetylation of multiple lysine residues located in its hinge region. The acetyltransferase activity of CLOCK is as important as its transcription activity in circadian control. Acetylates metabolic enzymes IMPDH2 and NDUFA9 in a circadian manner. Facilitated by BMAL1, rhythmically interacts and acetylates argininosuccinate synthase 1 (ASS1) leading to enzymatic inhibition of ASS1 as well as the circadian oscillation of arginine biosynthesis and subsequent ureagenesis. Drives the circadian rhythm of blood pressure through transcriptional activation of ATP1B1. This is Circadian locomoter output cycles protein kaput (CLOCK) from Homo sapiens (Human).